Here is a 288-residue protein sequence, read N- to C-terminus: 2-methoxy-6-polyprenyl-1,4-benzoquinol methylase, mitochondrial (288 aa).

A mitochondrion-targeting transit peptide spans 1–27 (MALRSVSRRLGSRILNQRSFVASLHSH). S-adenosyl-L-methionine contacts are provided by residues Thr-94, Asp-130, and 160–161 (DA).

This sequence belongs to the class I-like SAM-binding methyltransferase superfamily. MenG/UbiE family. Component of a multi-subunit COQ enzyme complex.

Its subcellular location is the mitochondrion inner membrane. The catalysed reaction is a 2-methoxy-6-(all-trans-polyprenyl)benzene-1,4-diol + S-adenosyl-L-methionine = a 5-methoxy-2-methyl-3-(all-trans-polyprenyl)benzene-1,4-diol + S-adenosyl-L-homocysteine + H(+). It participates in cofactor biosynthesis; ubiquinone biosynthesis. In terms of biological role, methyltransferase required for the conversion of 2-polyprenyl-6-methoxy-1,4-benzoquinol (DDMQH2) to 2-polyprenyl-3-methyl-6-methoxy-1,4-benzoquinol (DMQH2). This chain is 2-methoxy-6-polyprenyl-1,4-benzoquinol methylase, mitochondrial, found in Arabidopsis thaliana (Mouse-ear cress).